The following is a 155-amino-acid chain: 6,7-dimethyl-8-ribityllumazine synthase (155 aa).

5-amino-6-(D-ribitylamino)uracil-binding positions include phenylalanine 23, 57-59 (AFE), and 81-83 (AVI). 86 to 87 (ST) contacts (2S)-2-hydroxy-3-oxobutyl phosphate. Histidine 89 serves as the catalytic Proton donor. Phenylalanine 114 contacts 5-amino-6-(D-ribitylamino)uracil. Position 128 (arginine 128) interacts with (2S)-2-hydroxy-3-oxobutyl phosphate.

The protein belongs to the DMRL synthase family.

It catalyses the reaction (2S)-2-hydroxy-3-oxobutyl phosphate + 5-amino-6-(D-ribitylamino)uracil = 6,7-dimethyl-8-(1-D-ribityl)lumazine + phosphate + 2 H2O + H(+). It functions in the pathway cofactor biosynthesis; riboflavin biosynthesis; riboflavin from 2-hydroxy-3-oxobutyl phosphate and 5-amino-6-(D-ribitylamino)uracil: step 1/2. Catalyzes the formation of 6,7-dimethyl-8-ribityllumazine by condensation of 5-amino-6-(D-ribitylamino)uracil with 3,4-dihydroxy-2-butanone 4-phosphate. This is the penultimate step in the biosynthesis of riboflavin. The polypeptide is 6,7-dimethyl-8-ribityllumazine synthase (Desulfatibacillum aliphaticivorans).